Consider the following 776-residue polypeptide: Ent-8-alpha-hydroxylabd-13-en-15-yl diphosphate synthase CPS4, chloroplastic (776 aa).

A chloroplast-targeting transit peptide spans 1–60; it reads MSFASNATGFRIPLTTCVYPSPILRFNAKVGSGSSYGTTEAQRNMKCVDGIGRSRVVAVA. Lys226 contributes to the substrate binding site. Residues Asp357 and Asp359 each coordinate Mg(2+). Positions 357–360 match the DXDD motif motif; the sequence is DSDD. Lys443 provides a ligand contact to substrate.

It belongs to the terpene synthase family. It depends on Mg(2+) as a cofactor.

It is found in the plastid. Its subcellular location is the chloroplast. It catalyses the reaction ent-8alpha-hydroxylabd-13-en-15-yl diphosphate = (2E,6E,10E)-geranylgeranyl diphosphate + H2O. It functions in the pathway secondary metabolite biosynthesis; terpenoid biosynthesis. Functionally, involved in diterpenoid biosynthesis. Catalyzes the conversion of all-trans-geranylgeranyl diphosphate to ent-8alpha-hydroxylabd-13-en-15-yl diphosphate. The polypeptide is Ent-8-alpha-hydroxylabd-13-en-15-yl diphosphate synthase CPS4, chloroplastic (Salvia miltiorrhiza (Chinese sage)).